The chain runs to 281 residues: Acetyl-coenzyme A carboxylase carboxyl transferase subunit beta 2 (281 aa).

The region spanning 26–281 (LLTRCPVCHE…TITQGGHQDV (256 aa)) is the CoA carboxyltransferase N-terminal domain. Residues Cys30, Cys33, Cys48, and Cys51 each contribute to the Zn(2+) site. Residues 30 to 51 (CPVCHEDCYTQDLGEFKVCPHC) form a C4-type zinc finger.

Belongs to the AccD/PCCB family. As to quaternary structure, acetyl-CoA carboxylase is a heterohexamer composed of biotin carboxyl carrier protein (AccB), biotin carboxylase (AccC) and two subunits each of ACCase subunit alpha (AccA) and ACCase subunit beta (AccD). Zn(2+) is required as a cofactor.

It is found in the cytoplasm. It catalyses the reaction N(6)-carboxybiotinyl-L-lysyl-[protein] + acetyl-CoA = N(6)-biotinyl-L-lysyl-[protein] + malonyl-CoA. It participates in lipid metabolism; malonyl-CoA biosynthesis; malonyl-CoA from acetyl-CoA: step 1/1. In terms of biological role, component of the acetyl coenzyme A carboxylase (ACC) complex. Biotin carboxylase (BC) catalyzes the carboxylation of biotin on its carrier protein (BCCP) and then the CO(2) group is transferred by the transcarboxylase to acetyl-CoA to form malonyl-CoA. The chain is Acetyl-coenzyme A carboxylase carboxyl transferase subunit beta 2 from Lactiplantibacillus plantarum (strain JDM1) (Lactobacillus plantarum).